A 347-amino-acid polypeptide reads, in one-letter code: GMP reductase (347 aa).

NADP(+) is bound at residue 108–131; it reads ADFEKTQQILSQNPQLNFVCIDVA. 2 residues coordinate K(+): glycine 181 and glycine 183. Cysteine 186 acts as the Thioimidate intermediate in catalysis. 216–239 lines the NADP(+) pocket; sequence IISDGGCTMPGDVAKAFGGGADFV.

This sequence belongs to the IMPDH/GMPR family. GuaC type 1 subfamily. As to quaternary structure, homotetramer.

It catalyses the reaction IMP + NH4(+) + NADP(+) = GMP + NADPH + 2 H(+). Catalyzes the irreversible NADPH-dependent deamination of GMP to IMP. It functions in the conversion of nucleobase, nucleoside and nucleotide derivatives of G to A nucleotides, and in maintaining the intracellular balance of A and G nucleotides. The chain is GMP reductase from Klebsiella pneumoniae subsp. pneumoniae (strain ATCC 700721 / MGH 78578).